The sequence spans 650 residues: MICOS complex subunit MIC60, mitochondrial (650 aa).

A mitochondrion-targeting transit peptide spans 1 to 34 (MLRKSVLELSSRLSIKRFPRNLGAQRFHLSSSRN). Positions 26–74 (RFHLSSSRNASTSGKNGLPGAKPVGKPDASKVDPPKVTPPPPTKGNSSK) are disordered. Positions 28 to 40 (HLSSSRNASTSGK) are enriched in polar residues. Residues 35-74 (ASTSGKNGLPGAKPVGKPDASKVDPPKVTPPPPTKGNSSK) are Mitochondrial matrix-facing. The chain crosses the membrane as a helical span at residues 75-95 (VVIGGVAIAGAFLVAYQTGYL). At 96–549 (DQYLGKEQQK…FDTLKGTLRH (454 aa)) the chain is on the mitochondrial intermembrane side. Disordered regions lie at residues 121–168 (EAHH…ESDL), 239–267 (QSSS…EDGI), and 284–304 (EGSD…TKET). Low complexity predominate over residues 284 to 299 (EGSDTESTGSSSIGEQ). Coiled coils occupy residues 345 to 369 (AQVF…LRAR) and 396 to 430 (KAIQ…LAKA). The chain crosses the membrane as a helical span at residues 550 to 570 (FSLIPPGGGGILAHSLAHVAS). Residues 571-650 (SLKFKEVDQA…QSYATCVSLT (80 aa)) lie on the Mitochondrial matrix side of the membrane.

Belongs to the MICOS complex subunit Mic60 family. As to quaternary structure, component of the mitochondrial contact site and cristae organizing system (MICOS) complex. The MICOS complex associates with mitochondrial outer membrane proteins. Present in a large lipid-enriched complex called mitochondrial transmembrane lipoprotein (MTL) complex made of proteins located in the two mitochondrial membranes, including the TOM complex and the core components of the MICOS complex and containing at least digalactosyldiacylglycerol (DGDG). Binds to TOM40-1. Component of a mitochondrial large protein complex that contains, at least, MIC60, DGS1, TOM40, TOM20 proteins, and petC/RISP.

It is found in the mitochondrion inner membrane. In terms of biological role, component of the MICOS complex, a large protein complex of the mitochondrial inner membrane that plays crucial roles in the maintenance of crista junctions, inner membrane architecture, and formation of contact sites to the outer membrane. Plays a role in keeping cristae membranes connected to the inner boundary membrane. Also promotes protein import via the mitochondrial intermembrane space assembly (MIA) pathway. Involved in the maintenance of mitochondria morphology. Binds to glycerolipids such as cardiolipin (CL). Contributes to the export of phosphatidylethanolamine (PE) from mitochondria and to the import of galactoglycerolipids from plastids during phosphate (Pi) starvation. Promotes lipid desorption from membranes, likely as an initial step for lipid transfer, and regulates probably the tethering between the inner and outer membranes of mitochondria by binding to TOM40 proteins. This chain is MICOS complex subunit MIC60, mitochondrial, found in Arabidopsis thaliana (Mouse-ear cress).